The following is a 506-amino-acid chain: Serine/threonine-protein kinase D6PKL1 (506 aa).

The disordered stretch occupies residues 1 to 96; sequence MASKYGSGVL…TCSSFSGNNK (96 aa). Residues 12 to 23 show a composition bias toward basic and acidic residues; sequence ENKKEKGDKETP. Residues 24 to 54 are compositionally biased toward polar residues; it reads ETSYSSQSVSVNTLADQVSSTLSFAPSSDSK. Residues 55–67 show a composition bias toward basic and acidic residues; that stretch reads TGGEVKFNEKSDQ. Low complexity predominate over residues 77–92; the sequence is STSSDISDESTCSSFS. The region spanning 123 to 456 is the Protein kinase domain; sequence FRLLKRLGCG…ATEMKQHPFF (334 aa). Residues 129 to 137 and Lys-152 contribute to the ATP site; that span reads LGCGDIGTV. Asp-248 acts as the Proton acceptor in catalysis. Positions 475 to 495 are disordered; it reads PVDYESAPATPAAATSTSVKS. Positions 480-492 are enriched in low complexity; that stretch reads SAPATPAAATSTS.

Belongs to the protein kinase superfamily. AGC Ser/Thr protein kinase family.

The protein resides in the cell membrane. It catalyses the reaction L-seryl-[protein] + ATP = O-phospho-L-seryl-[protein] + ADP + H(+). The enzyme catalyses L-threonyl-[protein] + ATP = O-phospho-L-threonyl-[protein] + ADP + H(+). In terms of biological role, protein kinase that regulates the auxin transport activity of PIN auxin efflux facilitators by direct phosphorylation. D6PK-mediated PIN phosphorylation promotes auxin transport in the hypocotyl and this is a prerequisite for PHOT1-dependent hypocotyl bending. The sequence is that of Serine/threonine-protein kinase D6PKL1 (D6PKL1) from Arabidopsis thaliana (Mouse-ear cress).